We begin with the raw amino-acid sequence, 959 residues long: Bifunctional premutilin synthase (959 aa).

A class II diterpene cyclase region spans residues 1-542 (MGLSEDLHAR…ALNVPIPRFD (542 aa)). A DXDD motif motif is present at residues 309–312 (DADM). The For class II diterpene cyclase activity role is filled by D311. The tract at residues 543-959 (PSSISTLPAI…TANGSNGIHH (417 aa)) is class I diterpene synthase. D649 acts as the For class I diterpene synthase activity in catalysis. Positions 649, 653, and 824 each coordinate Mg(2+). The short motif at 649–653 (DDYLD) is the DDXXD motif element. Positions 931-959 (KGTNGVKKINGSSTNGTKVTANGSNGIHH) are disordered. A compositionally biased stretch (polar residues) spans 940 to 959 (NGSSTNGTKVTANGSNGIHH).

This sequence belongs to the terpene synthase family. Requires Mg(2+) as cofactor.

It participates in secondary metabolite biosynthesis; terpenoid biosynthesis. Functionally, bifunctional premutilin synthase; part of the gene cluster that mediates the biosynthesis of pleuromutilin, a tricyclic diterpene showing antibacterial properties. The geranylgeranyl diphosphate (GGPP) synthase catalyzes the first step in pleuromutilin biosynthesis. GGPP is then substrate of the premutilin synthase (PS) to yield premutilin. Premutilin synthase is a bifunctional enzyme composed of the fusion of a class II diterpene cyclase (DTC) and a class I diterpene synthase (DTS), with the corresponding domains and active sites containing characteristic aspartate-rich motifs. GGPP is first converted to mutildienyl-diphosphate (MPP) at the class II DTC site. MPP is subsequently further cyclized at the class I DTS site, followed by a 1,5-hydride shift and addition of water prior to terminating deprotonation, to yield premutilin. In addition to the aforementioned GGPP synthase and bifunctional diterpene synthase, the cluster also contains three cytochrome P450 monooxygenases, a short-chain alcohol dehydrogenase, and an acyltransferase, involved in the conversion of premutilin to pleuromutilin. The cytochrome P450 monooxygenases P450-1 and P450-2 hydroxylate premutilin at C-11 and C-3, respectively, producing 11-hydroxypremutilin and 3-hydroxypremutilin. The combination of the actions of both ple5 and ple6 leads to the production of 3,11-dihydroxypremutilin. The short chain dehydrogenase SDR further converts 3,11-dihydroxypremutilin into mutilin. The acetyltransferase ATF then acetylates mutilin to produce 14-O-acetylmutilin. Finally, the cytochrome P450 monooxygenase P450-3 catalyzes hydroxylation on the alpha position of the acetyl side chain of 14-O-acetylmutilin to yield pleuromutilin. The chain is Bifunctional premutilin synthase from Clitopilus passeckerianus (Pleurotus passeckerianus).